We begin with the raw amino-acid sequence, 1080 residues long: Carbamoyl phosphate synthase large chain (1080 aa).

Residues 1–403 form a carboxyphosphate synthetic domain region; sequence MPKRTDLKTI…SLQKALRGLE (403 aa). Residues Arg-129, Arg-169, Gly-175, Gly-176, Glu-208, Val-210, Glu-215, Gly-241, Val-242, His-243, Gln-285, and Glu-299 each coordinate ATP. An ATP-grasp 1 domain is found at 133 to 328; that stretch reads RVAMGEIGLD…IAKVAAKLAV (196 aa). Residues Gln-285, Glu-299, and Asn-301 each coordinate Mg(2+). The Mn(2+) site is built by Gln-285, Glu-299, and Asn-301. The interval 404-554 is oligomerization domain; the sequence is TGKIGLDPTG…YSTYEDECEA (151 aa). Residues 555-942 form a carbamoyl phosphate synthetic domain region; that stretch reads LPSNRDKIMI…AFARAQEAGG (388 aa). One can recognise an ATP-grasp 2 domain in the interval 679–876; the sequence is QQLVDKLGLK…LAKIAARCMA (198 aa). Arg-715, Arg-754, Leu-756, Glu-761, Gly-787, Val-788, His-789, Ser-790, Gln-830, and Glu-847 together coordinate ATP. Mg(2+) is bound by residues Gln-830, Glu-847, and Asn-849. Mn(2+) contacts are provided by Gln-830, Glu-847, and Asn-849. Residues 943–1080 form the MGS-like domain; the sequence is IKAPPLGKAF…LQELHKELEA (138 aa). Residues 943-1080 are allosteric domain; it reads IKAPPLGKAF…LQELHKELEA (138 aa).

Belongs to the CarB family. In terms of assembly, composed of two chains; the small (or glutamine) chain promotes the hydrolysis of glutamine to ammonia, which is used by the large (or ammonia) chain to synthesize carbamoyl phosphate. Tetramer of heterodimers (alpha,beta)4. Mg(2+) serves as cofactor. The cofactor is Mn(2+).

It carries out the reaction hydrogencarbonate + L-glutamine + 2 ATP + H2O = carbamoyl phosphate + L-glutamate + 2 ADP + phosphate + 2 H(+). The enzyme catalyses hydrogencarbonate + NH4(+) + 2 ATP = carbamoyl phosphate + 2 ADP + phosphate + 2 H(+). The protein operates within amino-acid biosynthesis; L-arginine biosynthesis; carbamoyl phosphate from bicarbonate: step 1/1. It functions in the pathway pyrimidine metabolism; UMP biosynthesis via de novo pathway; (S)-dihydroorotate from bicarbonate: step 1/3. Large subunit of the glutamine-dependent carbamoyl phosphate synthetase (CPSase). CPSase catalyzes the formation of carbamoyl phosphate from the ammonia moiety of glutamine, carbonate, and phosphate donated by ATP, constituting the first step of 2 biosynthetic pathways, one leading to arginine and/or urea and the other to pyrimidine nucleotides. The large subunit (synthetase) binds the substrates ammonia (free or transferred from glutamine from the small subunit), hydrogencarbonate and ATP and carries out an ATP-coupled ligase reaction, activating hydrogencarbonate by forming carboxy phosphate which reacts with ammonia to form carbamoyl phosphate. The polypeptide is Carbamoyl phosphate synthase large chain (Xanthomonas campestris pv. campestris (strain ATCC 33913 / DSM 3586 / NCPPB 528 / LMG 568 / P 25)).